A 455-amino-acid chain; its full sequence is Gametocyte surface protein P45/48 (455 aa).

The signal sequence occupies residues 1-30 (MLYFFGNSRFFLFFFYFFFYFVLVIKSSVG). The 139-residue stretch at 48 to 186 (LGYKCDFSTE…ALVHVTVLKY (139 aa)) folds into the 6-Cys 1 domain. 2 disulfides stabilise this stretch: Cys-52-Cys-74 and Cys-106-Cys-160. 4 N-linked (GlcNAc...) asparagine glycosylation sites follow: Asn-135, Asn-194, Asn-275, and Asn-307. Residues 302–433 (VIYGCNFSKD…ITGFMNIKIG (132 aa)) enclose the 6-Cys 2 domain. Intrachain disulfides connect Cys-306–Cys-334, Cys-351–Cys-419, and Cys-359–Cys-417. A lipid anchor (GPI-anchor amidated glycine) is attached at Gly-433. The propeptide at 434 to 455 (SAYYAFLSKLFIIFIPLFFMWL) is removed in mature form.

Heterodimer; heterodimerizes with PF230.

It localises to the cell surface. The protein resides in the cell membrane. Gametocyte surface protein required for male fertility. In Plasmodium berghei (strain Anka), this protein is Gametocyte surface protein P45/48 (PB45/48).